A 332-amino-acid chain; its full sequence is Aspartate carbamoyltransferase catalytic subunit (332 aa).

The carbamoyl phosphate site is built by Arg-78 and Thr-79. Lys-106 is an L-aspartate binding site. Carbamoyl phosphate-binding residues include Arg-128, His-156, and Gln-159. 2 residues coordinate L-aspartate: Arg-189 and Arg-243. Positions 284 and 285 each coordinate carbamoyl phosphate.

This sequence belongs to the aspartate/ornithine carbamoyltransferase superfamily. ATCase family. In terms of assembly, heterododecamer (2C3:3R2) of six catalytic PyrB chains organized as two trimers (C3), and six regulatory PyrI chains organized as three dimers (R2).

The enzyme catalyses carbamoyl phosphate + L-aspartate = N-carbamoyl-L-aspartate + phosphate + H(+). The protein operates within pyrimidine metabolism; UMP biosynthesis via de novo pathway; (S)-dihydroorotate from bicarbonate: step 2/3. Catalyzes the condensation of carbamoyl phosphate and aspartate to form carbamoyl aspartate and inorganic phosphate, the committed step in the de novo pyrimidine nucleotide biosynthesis pathway. The sequence is that of Aspartate carbamoyltransferase catalytic subunit from Caulobacter vibrioides (strain ATCC 19089 / CIP 103742 / CB 15) (Caulobacter crescentus).